A 1112-amino-acid chain; its full sequence is Patronin (microtubule-binding protein) homolog (1112 aa).

Residues 165–286 enclose the Calponin-homology (CH) domain; it reads IDSVDALLFW…VNAFLADLFV (122 aa). Disordered stretches follow at residues 324 to 358, 485 to 504, 542 to 566, and 788 to 834; these read AARS…SRMS, EGED…QPSV, MQQQ…PSQL, and NHSE…GSGE. Polar residues-rich tracts occupy residues 345 to 358 and 489 to 504; these read SHSQ…SRMS and GTQS…QPSV. The segment covering 542 to 557 has biased composition (low complexity); it reads MQQQMQQQQQQQAQAQ. Positions 802–816 are enriched in basic and acidic residues; the sequence is QNDRDDLSTGRKSDD. Residues 850–914 adopt a coiled-coil conformation; sequence ALIAKTMKRK…YKRKKLEKEL (65 aa). A disordered region spans residues 916 to 965; sequence AELSARSTGRGHSQPPFIRTKSQMSEVTESSRQNTPRMRGQSSVEQRVSV. Residues 935–951 are compositionally biased toward polar residues; it reads TKSQMSEVTESSRQNTP. The span at 956–965 shows a compositional bias: low complexity; the sequence is QSSVEQRVSV. The 138-residue stretch at 972-1109 folds into the CKK domain; it reads THKLYAKTVT…RIPHSGTPAH (138 aa).

The protein belongs to the CAMSAP1 family. As to quaternary structure, interacts with dapk-1. In terms of tissue distribution, expressed in larval and adult epidermis, intestine and pharynx. Broadly expressed in the nervous system. Expressed in body wall muscle cells.

The protein resides in the cell projection. It localises to the axon. The protein localises to the dendrite. It is found in the cell membrane. Its subcellular location is the sarcolemma. The protein resides in the cytoplasm. It localises to the cytosol. The protein localises to the cytoskeleton. It is found in the perikaryon. Functionally, required for microtubule stability and anchorage by binding to the minus ends of microtubules. Acts redundantly with noca-1 to control circumferential microtubule assembly along the body which is necessary for larval development, viability, morphology and integrity of the epidermis. Promotes microtubule stability and polymerization in neurons. Involved in the maintenance of neurite morphology in ALM and PLM neurons. May play a role in synaptic protein localization in the PLM neuron. May act upstream of dlk-1 in neuronal regeneration. Plays a role in postembryonic epidermal tissue integrity and wound healing. The chain is Patronin (microtubule-binding protein) homolog from Caenorhabditis elegans.